The following is a 256-amino-acid chain: DNA repair protein RecO (256 aa).

The protein belongs to the RecO family.

In terms of biological role, involved in DNA repair and RecF pathway recombination. The chain is DNA repair protein RecO from Streptococcus pneumoniae (strain Hungary19A-6).